The following is a 78-amino-acid chain: Large ribosomal subunit protein bL28 (78 aa).

Residues 1-20 (MSRVCQVTGKRPAVGNNRSH) form a disordered region.

It belongs to the bacterial ribosomal protein bL28 family.

The protein is Large ribosomal subunit protein bL28 of Actinobacillus succinogenes (strain ATCC 55618 / DSM 22257 / CCUG 43843 / 130Z).